Here is a 297-residue protein sequence, read N- to C-terminus: Phosphatidylserine decarboxylase proenzyme (297 aa).

Catalysis depends on charge relay system; for autoendoproteolytic cleavage activity residues Asp92, His149, and Ser254. Ser254 acts as the Schiff-base intermediate with substrate; via pyruvic acid; for decarboxylase activity in catalysis. Ser254 is modified (pyruvic acid (Ser); by autocatalysis).

This sequence belongs to the phosphatidylserine decarboxylase family. PSD-B subfamily. Prokaryotic type I sub-subfamily. Heterodimer of a large membrane-associated beta subunit and a small pyruvoyl-containing alpha subunit. Pyruvate serves as cofactor. In terms of processing, is synthesized initially as an inactive proenzyme. Formation of the active enzyme involves a self-maturation process in which the active site pyruvoyl group is generated from an internal serine residue via an autocatalytic post-translational modification. Two non-identical subunits are generated from the proenzyme in this reaction, and the pyruvate is formed at the N-terminus of the alpha chain, which is derived from the carboxyl end of the proenzyme. The autoendoproteolytic cleavage occurs by a canonical serine protease mechanism, in which the side chain hydroxyl group of the serine supplies its oxygen atom to form the C-terminus of the beta chain, while the remainder of the serine residue undergoes an oxidative deamination to produce ammonia and the pyruvoyl prosthetic group on the alpha chain. During this reaction, the Ser that is part of the protease active site of the proenzyme becomes the pyruvoyl prosthetic group, which constitutes an essential element of the active site of the mature decarboxylase.

It is found in the cell membrane. The enzyme catalyses a 1,2-diacyl-sn-glycero-3-phospho-L-serine + H(+) = a 1,2-diacyl-sn-glycero-3-phosphoethanolamine + CO2. It functions in the pathway phospholipid metabolism; phosphatidylethanolamine biosynthesis; phosphatidylethanolamine from CDP-diacylglycerol: step 2/2. In terms of biological role, catalyzes the formation of phosphatidylethanolamine (PtdEtn) from phosphatidylserine (PtdSer). The chain is Phosphatidylserine decarboxylase proenzyme from Bordetella parapertussis (strain 12822 / ATCC BAA-587 / NCTC 13253).